The primary structure comprises 535 residues: UDP-glucuronosyltransferase 1A1 (535 aa).

The N-terminal stretch at 1–29 (MSVVCRSSCSLLLLPCLLLCVLGPSASHA) is a signal peptide. 3 N-linked (GlcNAc...) asparagine glycosylation sites follow: asparagine 89, asparagine 297, and asparagine 435. A helical membrane pass occupies residues 493-509 (VIGFLLAIVLTVVFIVY).

The protein belongs to the UDP-glycosyltransferase family. In terms of assembly, homodimers. Homooligomer. Interacts with UGT1A3, UGT1A4, UGT1A6, UGT1A7, UGT1A8, UGT1A9 and UGT1A10 to form heterodimers.

Its subcellular location is the endoplasmic reticulum membrane. It catalyses the reaction glucuronate acceptor + UDP-alpha-D-glucuronate = acceptor beta-D-glucuronoside + UDP + H(+). It carries out the reaction 17beta-estradiol + UDP-alpha-D-glucuronate = 17beta-estradiol 3-O-(beta-D-glucuronate) + UDP + H(+). The catalysed reaction is 2-hydroxyestrone + UDP-alpha-D-glucuronate = 2-hydroxyestrone 3-O-(beta-D-glucuronate) + UDP + H(+). The enzyme catalyses 2-hydroxy-17beta-estradiol + UDP-alpha-D-glucuronate = 2-hydroxy-17beta-estradiol 3-O-(beta-D-glucuronate) + UDP + H(+). It catalyses the reaction 2-methoxy-17beta-estradiol + UDP-alpha-D-glucuronate = 2-methoxy-17beta-estradiol 3-O-(beta-D-glucuronate) + UDP + H(+). It carries out the reaction 17alpha-estradiol + UDP-alpha-D-glucuronate = 17alpha-estradiol 3-O-(beta-D-glucuronate) + UDP + H(+). The catalysed reaction is 16beta,17beta-estriol + UDP-alpha-D-glucuronate = 16beta,17beta-estriol 16-O-(beta-D-glucuronate) + UDP + H(+). The enzyme catalyses losartan + UDP-alpha-D-glucuronate = losartan-2-N-beta-D-glucuronide + UDP. It catalyses the reaction prunetin + UDP-alpha-D-glucuronate = prunetin-4'-O-beta-D-glucuronide + UDP. It carries out the reaction SN-38 + UDP-alpha-D-glucuronate = SN-38 O-beta-D-glucuronide + UDP + H(+). The catalysed reaction is (4Z,15Z)-bilirubin IXalpha + UDP-alpha-D-glucuronate = (4Z,15Z)-bilirubin IXalpha C12-beta-D-glucuronoside + UDP. The enzyme catalyses (4Z,15Z)-bilirubin IXalpha + UDP-alpha-D-glucuronate = (4Z,15Z)-bilirubin IXalpha C8-beta-D-glucuronoside + UDP. It catalyses the reaction (4Z,15Z)-bilirubin IXalpha C8-beta-D-glucuronoside + UDP-alpha-D-glucuronate = (4Z,15Z)-bilirubin IXalpha C8,C12-beta-D-bisglucuronoside + UDP. It carries out the reaction (4Z,15Z)-bilirubin IXalpha C12-beta-D-glucuronoside + UDP-alpha-D-glucuronate = (4Z,15Z)-bilirubin IXalpha C8,C12-beta-D-bisglucuronoside + UDP. The catalysed reaction is 8-iso-prostaglandin F2alpha + UDP-alpha-D-glucuronate = 8-iso-prostaglandin F2alpha-glucuronide + UDP + H(+). The enzyme catalyses (5Z,8Z,11Z,14Z)-eicosatetraenoate + UDP-alpha-D-glucuronate = O-[(5Z),(8Z),(11Z),(14Z)-eicosatetraenoyl]-beta-D-glucuronate + UDP. It catalyses the reaction 15-hydroxy-(5Z,8Z,11Z,13E)-eicosatetraenoate + UDP-alpha-D-glucuronate = 15-O-(beta-D-glucuronosyl)-(5Z,8Z,11Z,14Z)-eicosatetraenoate + UDP + H(+). It carries out the reaction 20-hydroxy-(5Z,8Z,11Z,14Z)-eicosatetraenoate + UDP-alpha-D-glucuronate = 20-O-(beta-D-glucuronosyl)-(5Z,8Z,11Z,14Z)-eicosatetraenoate + UDP + H(+). The catalysed reaction is prostaglandin B1 + UDP-alpha-D-glucuronate = 15-O-(beta-D-glucuronosyl)-prostaglandin B1 + UDP + H(+). The enzyme catalyses (E)-ferulate + UDP-alpha-D-glucuronate = (E)-4-O-(beta-D-glucuronosyl)-ferulate + UDP + H(+). It catalyses the reaction (E)-ferulate + UDP-alpha-D-glucuronate = (E)-ferulic acid beta-D-glucuronate ester + UDP. Its function is as follows. UDP-glucuronosyltransferase (UGT) that catalyzes phase II biotransformation reactions in which lipophilic substrates are conjugated with glucuronic acid to increase the metabolite's water solubility, thereby facilitating excretion into either the urine or bile. Essential for the elimination and detoxification of drugs, xenobiotics and endogenous compounds. Catalyzes the glucuronidation of endogenous estrogen hormones such as estradiol, estrone and estriol. Involved in the glucuronidation of bilirubin, a degradation product occurring in the normal catabolic pathway that breaks down heme in vertebrates. Involved in the glucuronidation of arachidonic acid (AA) and AA-derived eicosanoids including 15-HETE, 20-HETE, PGB1 and F2-isoprostane (8-iso-PGF2alpha). Involved in the glucuronidation of the phytochemical ferulic acid at the phenolic or the carboxylic acid group. Also catalyzes the glucuronidation the isoflavones genistein, daidzein, glycitein, formononetin, biochanin A and prunetin, which are phytoestrogens with anticancer and cardiovascular properties. Involved in the glucuronidation of the AGTR1 angiotensin receptor antagonist losartan, a drug which can inhibit the effect of angiotensin II. Involved in the biotransformation of 7-ethyl-10-hydroxycamptothecin (SN-38), the pharmacologically active metabolite of the anticancer drug irinotecan. In Rattus norvegicus (Rat), this protein is UDP-glucuronosyltransferase 1A1.